The chain runs to 200 residues: Small ribosomal subunit protein uS4 (200 aa).

Residues 22–42 form a disordered region; it reads TGKELEKRPYAPGPHGPGQRK. Positions 92 to 155 constitute an S4 RNA-binding domain; it reads ARLDNVVYKL…RNLSIIKESV (64 aa).

This sequence belongs to the universal ribosomal protein uS4 family. In terms of assembly, part of the 30S ribosomal subunit. Contacts protein S5. The interaction surface between S4 and S5 is involved in control of translational fidelity.

Its function is as follows. One of the primary rRNA binding proteins, it binds directly to 16S rRNA where it nucleates assembly of the body of the 30S subunit. With S5 and S12 plays an important role in translational accuracy. The polypeptide is Small ribosomal subunit protein uS4 (Bacillus velezensis (strain DSM 23117 / BGSC 10A6 / LMG 26770 / FZB42) (Bacillus amyloliquefaciens subsp. plantarum)).